The sequence spans 334 residues: Methionyl-tRNA formyltransferase (334 aa).

111–114 (SILP) provides a ligand contact to (6S)-5,6,7,8-tetrahydrofolate.

It belongs to the Fmt family.

It catalyses the reaction L-methionyl-tRNA(fMet) + (6R)-10-formyltetrahydrofolate = N-formyl-L-methionyl-tRNA(fMet) + (6S)-5,6,7,8-tetrahydrofolate + H(+). Its function is as follows. Attaches a formyl group to the free amino group of methionyl-tRNA(fMet). The formyl group appears to play a dual role in the initiator identity of N-formylmethionyl-tRNA by promoting its recognition by IF2 and preventing the misappropriation of this tRNA by the elongation apparatus. The polypeptide is Methionyl-tRNA formyltransferase (Gloeothece citriformis (strain PCC 7424) (Cyanothece sp. (strain PCC 7424))).